The following is a 106-amino-acid chain: Protein translocase subunit SecE (106 aa).

A run of 2 helical transmembrane segments spans residues 20–40 and 75–95; these read LPIRVIGMAIALVIAFILAAI and IVIGVTMIASLFFWAVDSIIV.

This sequence belongs to the SecE/SEC61-gamma family. As to quaternary structure, component of the Sec protein translocase complex. Heterotrimer consisting of SecY, SecE and SecG subunits. The heterotrimers can form oligomers, although 1 heterotrimer is thought to be able to translocate proteins. Interacts with the ribosome. Interacts with SecDF, and other proteins may be involved. Interacts with SecA.

Its subcellular location is the cell inner membrane. In terms of biological role, essential subunit of the Sec protein translocation channel SecYEG. Clamps together the 2 halves of SecY. May contact the channel plug during translocation. In Haemophilus influenzae (strain ATCC 51907 / DSM 11121 / KW20 / Rd), this protein is Protein translocase subunit SecE.